The following is a 501-amino-acid chain: MNLRPEEISSIIRQQIDKYEAQVEVSDVGTVIQVGDGIARVYGLEDCMAAELLEFPGGTLGMALNLEEDNIGCVIMGPYTHIKEGDPVKRTGRIISVPVGDALIGRVVNPLGQPIDGKGPIKTEKYRPTERIAPGVITRKSVTVPLQTGLKAIDAMVPVGRGQRELIIGDRQTGKTAVAVDAIINQKGQDVICIYVAVGQKASTVAGVVQTLEAHGAMEYSIVVAANASEPAPLLYLAPYSGCAMGEEFMDNGKDVLIIYDDLSKQATAYREMSLLLRRPPGREAFPGDVFYLHSRLLERAARLAPEFGGGSITALPIIETQAGDVSAYIPTNVISITDGQIFLETDLFNSGQRPAISVGLSVSRVGGAAQIKAMKQVAGQLRLDLAQYRELAAFAQFGSDLDKATQARLNRGARTVQILKQGQYKPYPVEEQVVVIYTAVKGFLDDVELNKIGAFEDGFINFMRSNKADILKAIREQKEIKPETDAKLVAAIEEFKKTFA.

169–176 provides a ligand contact to ATP; it reads GDRQTGKT.

It belongs to the ATPase alpha/beta chains family. As to quaternary structure, F-type ATPases have 2 components, CF(1) - the catalytic core - and CF(0) - the membrane proton channel. CF(1) has five subunits: alpha(3), beta(3), gamma(1), delta(1), epsilon(1). CF(0) has three main subunits: a(1), b(2) and c(9-12). The alpha and beta chains form an alternating ring which encloses part of the gamma chain. CF(1) is attached to CF(0) by a central stalk formed by the gamma and epsilon chains, while a peripheral stalk is formed by the delta and b chains.

It localises to the cell membrane. The enzyme catalyses ATP + H2O + 4 H(+)(in) = ADP + phosphate + 5 H(+)(out). Its function is as follows. Produces ATP from ADP in the presence of a proton gradient across the membrane. The alpha chain is a regulatory subunit. The protein is ATP synthase subunit alpha of Desulforamulus reducens (strain ATCC BAA-1160 / DSM 100696 / MI-1) (Desulfotomaculum reducens).